The sequence spans 55 residues: Large ribosomal subunit protein bL33 (55 aa).

This sequence belongs to the bacterial ribosomal protein bL33 family.

This Dehalococcoides mccartyi (strain ATCC BAA-2100 / JCM 16839 / KCTC 5957 / BAV1) protein is Large ribosomal subunit protein bL33.